The primary structure comprises 157 residues: Transcription inhibitor protein Gfh1 (157 aa).

The stretch at 1–74 (MAREVKLTKA…LEDVLSRAVI (74 aa)) forms a coiled coil.

The protein belongs to the GreA/GreB family. In terms of assembly, interacts with RNAP.

Inhibits all catalytic activities of RNA polymerase (RNAP) by partially occluding its substrate-binding site and preventing NTP binding. The polypeptide is Transcription inhibitor protein Gfh1 (gfh1) (Thermus aquaticus).